The sequence spans 151 residues: Ribonuclease H (151 aa).

The RNase H type-1 domain maps to 1–141 (MKHVDIFTDG…ADELARRGME (141 aa)). 4 residues coordinate Mg(2+): D9, E47, D69, and D133.

The protein belongs to the RNase H family. In terms of assembly, monomer. Requires Mg(2+) as cofactor.

The protein resides in the cytoplasm. The catalysed reaction is Endonucleolytic cleavage to 5'-phosphomonoester.. Its function is as follows. Endonuclease that specifically degrades the RNA of RNA-DNA hybrids. This is Ribonuclease H from Rhizobium etli (strain ATCC 51251 / DSM 11541 / JCM 21823 / NBRC 15573 / CFN 42).